Reading from the N-terminus, the 101-residue chain is Small ribosomal subunit protein bS18c (101 aa).

Belongs to the bacterial ribosomal protein bS18 family. Part of the 30S ribosomal subunit.

The protein localises to the plastid. The protein resides in the chloroplast. The polypeptide is Small ribosomal subunit protein bS18c (rps18) (Arabidopsis thaliana (Mouse-ear cress)).